A 441-amino-acid chain; its full sequence is DNA double-strand break repair protein Mre11 (441 aa).

Mn(2+) is bound by residues aspartate 9, histidine 11, aspartate 50, and asparagine 85. The Proton donor role is filled by histidine 86. The Mn(2+) site is built by histidine 150, aspartate 181, and histidine 183. Positions 360 to 441 are disordered; that stretch reads ESLLSDDPDA…SRDSSLGDFA (82 aa). 2 stretches are compositionally biased toward acidic residues: residues 379–403 and 411–425; these read AEAE…EDTA and TDTD…DSET.

It belongs to the MRE11/RAD32 family. As to quaternary structure, homodimer. Forms a heterotetramer composed of two Mre11 subunits and two Rad50 subunits. Requires Mn(2+) as cofactor.

With respect to regulation, nuclease activity is regulated by Rad50. In terms of biological role, part of the Rad50/Mre11 complex, which is involved in the early steps of DNA double-strand break (DSB) repair. Mre11 binds to DSB ends and has both double-stranded 3'-5' exonuclease activity and single-stranded endonuclease activity. In polyploid organisms, the Rad50/Mre11 complex appears to restrain the repair of double-strand breaks by homologous recombination, allowing another pathway to act as the primary mode of repair. The chain is DNA double-strand break repair protein Mre11 from Haloferax volcanii (strain ATCC 29605 / DSM 3757 / JCM 8879 / NBRC 14742 / NCIMB 2012 / VKM B-1768 / DS2) (Halobacterium volcanii).